The primary structure comprises 202 residues: Succinate dehydrogenase cytochrome b558 subunit (202 aa).

Helical transmembrane passes span 12 to 31, 60 to 79, 93 to 113, 135 to 155, and 178 to 196; these read LHSL…HLVV, IFII…YIAF, NWLF…VSWH, ILSS…TIFH, and ISTY…VGLK. Residues histidine 28, histidine 70, histidine 113, and histidine 155 each contribute to the heme site.

This sequence belongs to the cytochrome b558 family. In terms of assembly, part of an enzyme complex containing three subunits: a flavoprotein, an iron-sulfur protein and cytochrome b-558.

The protein resides in the cell membrane. Its pathway is carbohydrate metabolism; tricarboxylic acid cycle. Its function is as follows. Di-heme cytochrome of the succinate dehydrogenase complex. This Bacillus subtilis (strain 168) protein is Succinate dehydrogenase cytochrome b558 subunit (sdhC).